The chain runs to 320 residues: Malate dehydrogenase (320 aa).

Residues Gly10–Gly15 and Asp34 each bind NAD(+). 2 residues coordinate substrate: Arg83 and Arg89. NAD(+) contacts are provided by residues Asn96 and Ile119–Asn121. Positions 121 and 152 each coordinate substrate. His176 serves as the catalytic Proton acceptor.

Belongs to the LDH/MDH superfamily. MDH type 3 family.

The enzyme catalyses (S)-malate + NAD(+) = oxaloacetate + NADH + H(+). In terms of biological role, catalyzes the reversible oxidation of malate to oxaloacetate. The chain is Malate dehydrogenase from Dinoroseobacter shibae (strain DSM 16493 / NCIMB 14021 / DFL 12).